A 257-amino-acid chain; its full sequence is Insulin-induced gene 1 protein (257 aa).

Topologically, residues 1–64 (MPRLHDHVWS…ARPGSWHHDL (64 aa)) are cytoplasmic. The segment at 32–54 (CPQGSGAPEPAPRSPRAGTAGCG) is disordered. The chain crosses the membrane as a helical span at residues 65-87 (VQRSLVLFSFGVVLALVLNLLQI). Residues 88–106 (QRNVTLFPDEVIATIFSSA) lie on the Extracellular side of the membrane. Residues 107–124 (WWVPPCCGTAAAVVGLLY) traverse the membrane as a helical segment. Topologically, residues 125-139 (PCIDSHLGEPHKFKR) are cytoplasmic. Residues lysine 136 and lysine 138 each participate in a glycyl lysine isopeptide (Lys-Gly) (interchain with G-Cter in ubiquitin) cross-link. The helical transmembrane segment at 140–162 (EWASVMRCIAVFVGINHASAKLD) threads the bilayer. Over 163–165 (FAN) the chain is Extracellular. The chain crosses the membrane as a helical span at residues 166–184 (NVQLSLTLAALSLGLWWTF). Topologically, residues 185-189 (DRSRS) are cytoplasmic. Position 187 is a phosphoserine (serine 187). The helical transmembrane segment at 190-211 (GLGLGITIAFLATLITQFLVYN) threads the bilayer. Over 212-225 (GVYQYTSPDFLYIR) the chain is Extracellular. The helical transmembrane segment at 226 to 243 (SWLPCIFFSGGVTVGNIG) threads the bilayer. The Cytoplasmic portion of the chain corresponds to 244–257 (RQLAMGVPEKPHSD). Positions 251–257 (PEKPHSD) match the KxHxx motif.

Belongs to the INSIG family. In terms of assembly, interacts with SCAP; interaction is direct and only takes place in the presence of sterols; it prevents interaction between SCAP and the coat protein complex II (COPII). Associates with the SCAP-SREBP complex (composed of SCAP and SREBF1/SREBP1 or SREBF2/SREBP2); association is mediated via its interaction with SCAP and only takes place in the presence of sterols. Interaction with SCAP is mutually exclusive with PAQR3. Interacts with HMGCR (via its SSD); the interaction, accelerated by sterols, leads to the recruitment of HMGCR to AMFR/gp78 for its ubiquitination by the sterol-mediated ERAD pathway. Interacts with AMFR/gp78 (via its membrane domain); the interaction recruits HMCR at the ER membrane for its ubiquitination and degradation by the sterol-mediated ERAD pathway. Interacts with SOAT2/ACAT2; leading to promote recruitment of AMFR/gp78 and subsequent ubiquitination of SOAT2/ACAT2. Interacts with RNF139. Interacts with RNF145. Phosphorylation at Ser-187 by PCK1 reduces binding to oxysterol, disrupting the interaction between INSIG1 and SCAP, thereby promoting nuclear translocation of SREBP proteins (SREBF1/SREBP1 or SREBF2/SREBP2) and subsequent transcription of downstream lipogenesis-related genes. Post-translationally, ubiquitinated by AMFR/gp78 in response to sterol deprivation, leading to its degradation: when the SCAP-SREBP complex becomes dissociated from INSIG1, INSIG1 is then ubiquitinated and degraded in proteasomes. Although ubiquitination is required for rapid INSIG1 degradation, it is not required for release of the SCAP-SREBP complex. Ubiquitinated by RNF139.

Its subcellular location is the endoplasmic reticulum membrane. Functionally, oxysterol-binding protein that mediates feedback control of cholesterol synthesis by controlling both endoplasmic reticulum to Golgi transport of SCAP and degradation of HMGCR. Acts as a negative regulator of cholesterol biosynthesis by mediating the retention of the SCAP-SREBP complex in the endoplasmic reticulum, thereby blocking the processing of sterol regulatory element-binding proteins (SREBPs) SREBF1/SREBP1 and SREBF2/SREBP2. Binds oxysterol, including 25-hydroxycholesterol, regulating interaction with SCAP and retention of the SCAP-SREBP complex in the endoplasmic reticulum. In presence of oxysterol, interacts with SCAP, retaining the SCAP-SREBP complex in the endoplasmic reticulum, thereby preventing SCAP from escorting SREBF1/SREBP1 and SREBF2/SREBP2 to the Golgi. Sterol deprivation or phosphorylation by PCK1 reduce oxysterol-binding, disrupting the interaction between INSIG1 and SCAP, thereby promoting Golgi transport of the SCAP-SREBP complex, followed by processing and nuclear translocation of SREBF1/SREBP1 and SREBF2/SREBP2. Also regulates cholesterol synthesis by regulating degradation of HMGCR: initiates the sterol-mediated ubiquitin-mediated endoplasmic reticulum-associated degradation (ERAD) of HMGCR via recruitment of the reductase to the ubiquitin ligases AMFR/gp78 and/or RNF139. Also regulates degradation of SOAT2/ACAT2 when the lipid levels are low: initiates the ubiquitin-mediated degradation of SOAT2/ACAT2 via recruitment of the ubiquitin ligases AMFR/gp78. The sequence is that of Insulin-induced gene 1 protein from Cricetulus griseus (Chinese hamster).